The sequence spans 544 residues: Methionine--tRNA ligase (544 aa).

The 'HIGH' region signature appears at 10-20 (PYANGSLHLGH). The Zn(2+) site is built by Cys-141, Cys-144, Cys-153, and Cys-156. Residues 329-333 (KLSTS) carry the 'KMSKS' region motif. Thr-332 is a binding site for ATP.

The protein belongs to the class-I aminoacyl-tRNA synthetase family. MetG type 1 subfamily. Monomer. The cofactor is Zn(2+).

The protein resides in the cytoplasm. The enzyme catalyses tRNA(Met) + L-methionine + ATP = L-methionyl-tRNA(Met) + AMP + diphosphate. Its function is as follows. Is required not only for elongation of protein synthesis but also for the initiation of all mRNA translation through initiator tRNA(fMet) aminoacylation. In Bacillus cereus (strain AH187), this protein is Methionine--tRNA ligase.